A 296-amino-acid chain; its full sequence is DNA repair protein complementing XP-A cells homolog (296 aa).

Polar residues predominate over residues 1–10; the sequence is MSAEVSTNES. The tract at residues 1 to 39 is disordered; sequence MSAEVSTNESAPPAEKKSKLTNAQKARIERNQAKAQKLR. A compositionally biased stretch (basic and acidic residues) spans 26–39; the sequence is ARIERNQAKAQKLR. The Nuclear localization signal signature appears at 26–47; that stretch reads ARIERNQAKAQKLREAKLVSHP. Residues cysteine 126, cysteine 129, cysteine 147, and cysteine 150 each contribute to the Zn(2+) site. A zinc finger spans residues 126–150; sequence CLECGDMFADSYLFNNFGHSVCDKC.

The protein belongs to the XPA family. As to expression, strongly expressed in the central nervous system and muscles.

It is found in the nucleus. Involved in DNA excision repair. Initiates repair by binding to damaged sites with various affinities, depending on the photoproduct and the transcriptional state of the region. The protein is DNA repair protein complementing XP-A cells homolog (Xpac) of Drosophila melanogaster (Fruit fly).